Here is a 72-residue protein sequence, read N- to C-terminus: MSKNDVIEVEGKVLEPLPNAMFRVELQNGHKVLAHVSGKIRMNFIRILPGDRVTVELSPYDLTRGRIVYRFK.

Residues Met1–Lys72 form the S1-like domain.

The protein belongs to the IF-1 family. Component of the 30S ribosomal translation pre-initiation complex which assembles on the 30S ribosome in the order IF-2 and IF-3, IF-1 and N-formylmethionyl-tRNA(fMet); mRNA recruitment can occur at any time during PIC assembly.

It localises to the cytoplasm. In terms of biological role, one of the essential components for the initiation of protein synthesis. Stabilizes the binding of IF-2 and IF-3 on the 30S subunit to which N-formylmethionyl-tRNA(fMet) subsequently binds. Helps modulate mRNA selection, yielding the 30S pre-initiation complex (PIC). Upon addition of the 50S ribosomal subunit IF-1, IF-2 and IF-3 are released leaving the mature 70S translation initiation complex. The sequence is that of Translation initiation factor IF-1 from Desulforamulus reducens (strain ATCC BAA-1160 / DSM 100696 / MI-1) (Desulfotomaculum reducens).